The sequence spans 417 residues: Acid phosphatase (417 aa).

The first 19 residues, 1–19 (MFTKQSLVTLLGGLSLAVA), serve as a signal peptide directing secretion. N-linked (GlcNAc...) asparagine glycosylation is found at N122, N187, and N209. Residue D216 is the Proton donor of the active site. N-linked (GlcNAc...) asparagine glycans are attached at residues N218, N333, and N383.

The N-terminus is blocked.

Its subcellular location is the secreted. The catalysed reaction is a phosphate monoester + H2O = an alcohol + phosphate. The polypeptide is Acid phosphatase (phoA) (Aspergillus niger).